We begin with the raw amino-acid sequence, 282 residues long: MSGGWMAQVGAWRTGALGLALLLLLGLGLGLEAAASPLSTPTSAQAAGPSSGSCPPTKFQCRTSGLCVPLTWRCDRDLDCSDGSDEEECRIEPCTQKGQCPPPPGLPCPCTGVSDCSGGTDKKLRNCSRLACLAGELRCTLSDDCIPLTWRCDGHPDCPDSSDELGCGTNEILPEGDATTMGPPVTLESVTSLRNATTMGPPVTLESVPSVGNATSSSAGDQSGSPTAYGVIAAAAVLSASLVTATLLLLSWLRAQERLRPLGLLVAMKESLLLSEQKTSLP.

A signal peptide spans Met-1–Ala-35. Residues Ser-36–Tyr-229 lie on the Extracellular side of the membrane. The LDL-receptor class A 1 domain occupies Ser-53–Arg-90. Cystine bridges form between Cys-54–Cys-67, Cys-61–Cys-80, and Cys-74–Cys-89. Ca(2+) is bound by residues Trp-72, Asp-75, Asp-77, Asp-79, Asp-85, and Glu-86. The N-linked (GlcNAc...) asparagine glycan is linked to Asn-126. Residues Ala-131 to Gly-168 enclose the LDL-receptor class A 2 domain. Cystine bridges form between Cys-132/Cys-145, Cys-139/Cys-158, and Cys-152/Cys-167. Positions 150, 153, 155, 157, 163, and 164 each coordinate Ca(2+). N-linked (GlcNAc...) asparagine glycans are attached at residues Asn-195 and Asn-213. The interval Met-199–Ser-223 is disordered. Over residues Ser-210–Ser-223 the composition is skewed to polar residues. Residues Gly-230 to Leu-250 form a helical membrane-spanning segment. The Cytoplasmic segment spans residues Ser-251–Pro-282.

Interacts (via LDL-receptor class A domains) with TCN2. As to expression, detected in the germinal center (GC) of lymphoid follicles (at protein level). Expressed abundantly on follicular dendritic cells (FDCs).

The protein resides in the cell membrane. In terms of biological role, receptor for transcobalamin saturated with cobalamin (TCbl). Plays an important role in cobalamin uptake. Plasma membrane protein that is expressed on follicular dendritic cells (FDC) and mediates interaction with germinal center B cells. Functions as costimulator to promote B cell responses to antigenic stimuli; promotes B cell differentiation and proliferation. Germinal center-B (GC-B) cells differentiate into memory B-cells and plasma cells (PC) through interaction with T-cells and follicular dendritic cells (FDC). CD320 augments the proliferation of PC precursors generated by IL-10. The polypeptide is CD320 antigen (CD320) (Homo sapiens (Human)).